The sequence spans 227 residues: UPF0173 metal-dependent hydrolase BC_4613 (227 aa).

The protein belongs to the UPF0173 family.

This Bacillus cereus (strain ATCC 14579 / DSM 31 / CCUG 7414 / JCM 2152 / NBRC 15305 / NCIMB 9373 / NCTC 2599 / NRRL B-3711) protein is UPF0173 metal-dependent hydrolase BC_4613.